We begin with the raw amino-acid sequence, 389 residues long: Alpha-(1,3)-fucosyltransferase 7 (389 aa).

The Cytoplasmic portion of the chain corresponds to M1 to P55. The chain crosses the membrane as a helical; Signal-anchor for type II membrane protein span at residues T56–W78. Residues L79–A389 lie on the Lumenal side of the membrane. C115 and C123 are oxidised to a cystine. N128 carries an N-linked (GlcNAc...) asparagine glycan. C258 and C261 are disulfide-bonded. N338 carries an N-linked (GlcNAc...) asparagine glycan. Cysteines 365 and 368 form a disulfide.

Belongs to the glycosyltransferase 10 family. In terms of processing, N-glycosylated. As to expression, highly expressed in lung and bone marrow and to a much lesser extent in spleen, salivary gland and skeletal muscle.

It localises to the golgi apparatus. The protein resides in the golgi stack membrane. The enzyme catalyses an N-acetyl-alpha-neuraminyl-(2-&gt;3)-beta-D-galactosyl-(1-&gt;4)-N-acetyl-beta-D-glucosaminyl derivative + GDP-beta-L-fucose = an alpha-Neu5Ac-(2-&gt;3)-beta-D-Gal-(1-&gt;4)-[alpha-L-Fuc-(1-&gt;3)]-beta-D-GlcNAc derivative + GDP + H(+). It catalyses the reaction an alpha-Neu5Ac-(2-&gt;3)-beta-D-Gal-(1-&gt;4)-beta-D-GlcNAc6S derivative + GDP-beta-L-fucose = an alpha-Neu5Ac-(2-&gt;3)-beta-D-Gal-(1-&gt;4)-[alpha-L-Fuc-(1-&gt;3)]-beta-D-GlcNAc6S derivative + GDP + H(+). The catalysed reaction is a neolactoside IV(3)-alpha-NeuAc-nLc4Cer + GDP-beta-L-fucose = a neolactoside IV(3)-alpha-NeuNAc,III(3)-alpha-Fuc-nLc4Cer + GDP + H(+). It carries out the reaction a neolactoside VI(3)-alpha-NeuNAc-nLc6Cer + GDP-beta-L-fucose = a neolactoside VI(3)-alpha-NeuAc,V(3)-alphaFuc-nLc6Cer + GDP + H(+). The enzyme catalyses an alpha-Neu5Ac-(2-&gt;3)-beta-D-Gal-(1-&gt;4)-beta-D-GlcNAc-(1-&gt;3)-beta-D-Gal-(1-&gt;4)-[alpha-L-Fuc-(1-&gt;3)]-beta-D-GlcNAc derivative + GDP-beta-L-fucose = an alpha-Neu5Ac-(2-&gt;3)-beta-D-Gal-(1-&gt;4)-[alpha-L-Fuc-(1-&gt;3)]-beta-D-GlcNAc-(1-&gt;3)-beta-D-Gal-(1-&gt;4)-[alpha-L-Fuc-(1-&gt;3)]-beta-D-GlcNAc derivative + GDP + H(+). It catalyses the reaction alpha-Neu5Ac-(2-&gt;3)-beta-D-Gal-(1-&gt;4)-beta-D-GlcNAc-(1-&gt;3)-beta-D-Gal-(1-&gt;4)-D-Glc + GDP-beta-L-fucose = alpha-Neu5Ac-(2-&gt;3)-beta-D-Gal-(1-&gt;4)-[alpha-L-Fuc-(1-&gt;3)]-beta-D-GlcNAc-(1-&gt;3)-beta-D-Gal-(1-&gt;4)-D-Glc + GDP + H(+). The catalysed reaction is alpha-Neu5Ac-(2-&gt;3)-beta-D-Gal-(1-&gt;4)-beta-D-GlcNAc-(1-&gt;3)-beta-D-Gal-(1-&gt;4)-[alpha-L-Fuc-(1-&gt;3)]-beta-D-GlcNAc-(1-&gt;3)-beta-D-Gal-(1-&gt;4)-beta-D-GlcNAc + GDP-beta-L-fucose = alpha-Neu5Ac-(2-&gt;3)-beta-D-Gal-(1-&gt;4)-[alpha-L-Fuc-(1-&gt;3)]-beta-D-GlcNAc-(1-&gt;3)-beta-D-Gal-(1-&gt;4)-[alpha-L-Fuc-(1-&gt;3)]-beta-D-GlcNAc-(1-&gt;3)-beta-D-Gal-(1-&gt;4)-beta-D-GlcNAc + GDP + H(+). It carries out the reaction alpha-Neu5Ac-(2-&gt;3)-beta-D-Gal-(1-&gt;4)-beta-D-GlcNAc-(1-&gt;3)-beta-D-Gal-(1-&gt;4)-beta-D-GlcNAc-(1-&gt;3)-beta-D-Gal-(1-&gt;4)-beta-D-GlcNAc + GDP-beta-L-fucose = alpha-Neu5Ac-(2-&gt;3)-beta-D-Gal-(1-&gt;4)-[alpha-L-Fuc-(1-&gt;3)]-beta-D-GlcNAc-(1-&gt;3)-beta-D-Gal-(1-&gt;4)-beta-D-GlcNAc-(1-&gt;3)-beta-D-Gal-(1-&gt;4)-beta-D-GlcNAc + GDP + H(+). The protein operates within protein modification; protein glycosylation. With respect to regulation, inhibited by NaCl. Inhibited by GDP in a concentration dependent manner, with an IC(50) value of 93 uM. Also inhibited by GMP and GTP. Inhibited by N-ethylmaleimide. Activated by poly(ethylene glycol) by enhancing the thermal stability of FUT7. Activated by Mn2+, Ca2+, and Mg2+. Both panosialin A and B inhibit activity with IC(50) values of 4.8 and 5.3 ug/ml, respectively. Inhibited by gallic acid (GA) and (-)-epigallocatechin gallate (EGCG) in a time-dependent and irreversible manner with IC(50) values of 60 and 700 nM, respectively. Catalyzes the transfer of L-fucose, from a guanosine diphosphate-beta-L-fucose, to the N-acetyl glucosamine (GlcNAc) of a distal alpha2,3 sialylated lactosamine unit of a glycoprotein or a glycolipid-linked sialopolylactosamines chain through an alpha-1,3 glycosidic linkage and participates in the final fucosylation step in the biosynthesis of the sialyl Lewis X (sLe(x)), a carbohydrate involved in cell and matrix adhesion during leukocyte trafficking and fertilization. In vitro, also synthesizes sialyl-dimeric-Lex structures, from VIM-2 structures and both di-fucosylated and trifucosylated structures from mono-fucosylated precursors. However does not catalyze alpha 1-3 fucosylation when an internal alpha 1-3 fucosylation is present in polylactosamine chain and the fucosylation rate of the internal GlcNAc residues is reduced once fucose has been added to the distal GlcNAc. Also catalyzes the transfer of a fucose from GDP-beta-fucose to the 6-sulfated a(2,3)sialylated substrate to produce 6-sulfo sLex mediating significant L-selectin-dependent cell adhesion. Through sialyl-Lewis(x) biosynthesis, can control SELE- and SELP-mediated cell adhesion with leukocytes and allows leukocytes tethering and rolling along the endothelial tissue thereby enabling the leukocytes to accumulate at a site of inflammation. May enhance embryo implantation through sialyl Lewis X (sLeX)-mediated adhesion of embryo cells to endometrium. May affect insulin signaling by up-regulating the phosphorylation and expression of some signaling molecules involved in the insulin-signaling pathway through SLe(x) which is present on the glycans of the INSRR alpha subunit. In Mus musculus (Mouse), this protein is Alpha-(1,3)-fucosyltransferase 7.